Here is a 452-residue protein sequence, read N- to C-terminus: Adenylosuccinate synthetase 2 (452 aa).

GTP contacts are provided by residues 19-25 (GDEGKAR) and 47-49 (GHT). The active-site Proton acceptor is aspartate 20. Mg(2+) is bound by residues aspartate 20 and glycine 47. IMP-binding positions include 20-23 (DEGK), 45-48 (NAGH), threonine 131, arginine 145, glutamine 223, threonine 238, and arginine 338. The active-site Proton donor is the histidine 48. 334–340 (TGTGRPR) contributes to the substrate binding site. GTP-binding positions include arginine 340, 366–368 (KCD), and 437–439 (GLG).

The protein belongs to the adenylosuccinate synthetase family. As to quaternary structure, homodimer. The cofactor is Mg(2+).

The protein localises to the cytoplasm. The enzyme catalyses IMP + L-aspartate + GTP = N(6)-(1,2-dicarboxyethyl)-AMP + GDP + phosphate + 2 H(+). It functions in the pathway purine metabolism; AMP biosynthesis via de novo pathway; AMP from IMP: step 1/2. Its function is as follows. Plays an important role in the de novo pathway of purine nucleotide biosynthesis. Catalyzes the first committed step in the biosynthesis of AMP from IMP. The protein is Adenylosuccinate synthetase 2 of Cupriavidus pinatubonensis (strain JMP 134 / LMG 1197) (Cupriavidus necator (strain JMP 134)).